Here is a 1021-residue protein sequence, read N- to C-terminus: Chondroitin sulfate ABC endolyase (1021 aa).

Positions 1–24 (MPIFRFTALAMTLGLLSAPYNAMA) are cleaved as a signal peptide. Residues H43, M70, Q73, and D211 each coordinate Na(+). H501 functions as the Proton acceptor in the catalytic mechanism. Y508 serves as the catalytic Proton donor.

Belongs to the polysaccharide lyase 8 family. Monomer.

The protein localises to the periplasm. The catalysed reaction is Endolytic cleavage of (1-&gt;4)-beta-galactosaminic bonds between N-acetylgalactosamine and either D-glucuronic acid or L-iduronic acid to produce a mixture of Delta(4)-unsaturated oligosaccharides of different sizes that are ultimately degraded to Delta(4)-unsaturated tetra- and disaccharides.. Its activity is regulated as follows. Is inhibited by Zn(2+), Ni(2+), Fe(2+) and Cu(2+). Its function is as follows. Endolytic, broad-specificity glycosaminoglycan lyase, which degrades the polysaccharides chondroitin, chondroitin-4-sulfate, chondroitin-6-sulfate, dermatan sulfate and to a lesser extent hyaluronan, by beta-elimination of 1,4-hexosaminidic bond to unsaturated tetrasaccharides and disaccharides. Is not active against keratan sulfate, heparan sulfate, and heparin. Is able to promote functional recovery in the injured central nervous system (CNS), via its role in the disruption of the normal organization of the extracellular matrix (ECM). The polypeptide is Chondroitin sulfate ABC endolyase (Proteus vulgaris).